The following is a 232-amino-acid chain: Replicative helicase loading/DNA remodeling protein DnaD (232 aa).

The interval 1-98 (MKKQQFIDMQ…QNGIKFEKYS (98 aa)) is N-terminal domain. The segment at 1–116 (MKKQQFIDMQ…YEYIQLAQNQ (116 aa)) is DDBH1. Positions 99 to 205 (LQPLWGKLYE…VEQAKIHSQK (107 aa)) are C-terminal domain. Residues 131–200 (TIFEEEFARP…NGLKTVEQAK (70 aa)) form a DDBH2 region. The segment at 206–232 (FRRVQAKQNEPQKEYKRQVPFYNWLEQ) is C-terminal tail.

The protein belongs to the DnaB/DnaD family. In terms of assembly, the DNA replisome assembles sequentially on oriC in this order; DnaA, DnaD, DnaB, DnaI-DnaC helicase. Homodimer. Homotetramer. Oligomerization in vitro is concentration dependent. Part of the replication restart primosome which assembles in this order; PriA, DnaD then DnaB. The preferred DNA substrate mimics an arrested DNA replication fork with unreplicated lagging strand. Interacts with DnaA, DnaB and PriA. Interaction with DnaB requires DnaD to dimerize.

It localises to the cytoplasm. With respect to regulation, recruitment to oriC requires DnaA but not DnaB, DnaC or DnaI and is blocked by SirA. Its function is as follows. Required to load replicative helicase DnaC onto replication forks. Binds to a DnaD recognition element (DRE) which has pairs of 5'-TnnT-3' motifs; there is a strong DRE at oriC opposite the DnaA-trios recognized by DnaA. During DNA replication from the origin of replication (oriC) in the DNA replisome, DnaD is required after DnaA, before DnaB and subsequent helicase DnaC loading. A component of the replication restart primosome, which reloads the replicative helicase on sites other than oriC. DnaB, DnaD and DnaI may also be required for a PriA-independent pathway of replication fork restart. DnaB and DnaD work together to allow DnaB access to single-stranded (ss)DNA. Has DNA remodeling activity that converts supercoiled plasmid into an open circular form; DnaD forms scaffolds inside the plasmid DNA. Plasmid relaxation incorporates both wrapping around the DnaD protein scaffold and simultaneous untwisting, no nicking of the DNA is seen. Also converts linear DNA into an open circular form. Disrupts a replicative helicase-DnaI complex. Inhibits the ability of DnaA-ATP to form a helix on DNA; does not disassemble preformed helices in vitro. Binds ssDNA, and replication fork-like substrates, supercoiled plasmid, but not stably to short double-stranded (ds)DNA. DnaD stimulates DnaB DNA-binding activities. DnaB and DnaD are required to load helicase on the repN plasmid origin of replication (oriN). Causes a severe growth defect upon overexpression even in an oriC-independent strain. The chain is Replicative helicase loading/DNA remodeling protein DnaD from Bacillus subtilis (strain 168).